Here is a 1132-residue protein sequence, read N- to C-terminus: Ubiquitin carboxyl-terminal hydrolase 43 (1132 aa).

The tract at residues 1 to 103 is disordered; the sequence is MDPGVGNALG…GARPPGAQGL (103 aa). Positions 17-28 are enriched in basic residues; sequence RPRRRRSLRRLL. 2 stretches are compositionally biased toward low complexity: residues 29 to 44 and 63 to 78; these read NRFL…SGDS and FACA…GSPG. The USP domain occupies 101–710; the sequence is QGLKNHGNTC…GAYILFYQKR (610 aa). The Nucleophile role is filled by Cys110. The active-site Proton acceptor is the His668. At Arg746 the chain carries Asymmetric dimethylarginine. 4 disordered regions span residues 839-891, 935-1008, 1024-1044, and 1057-1106; these read RRRP…TGVP, TVMP…RGQG, RTVR…SDRL, and RESP…GEQI. Over residues 941-950 the composition is skewed to basic and acidic residues; that stretch reads GDEKPARPEG. A compositionally biased stretch (low complexity) spans 958 to 967; sequence GSSQVGSQSS. A Phosphoserine modification is found at Ser970. A compositionally biased stretch (basic and acidic residues) spans 994–1006; that stretch reads AAMEERAPDKDRG.

The protein belongs to the peptidase C19 family.

It carries out the reaction Thiol-dependent hydrolysis of ester, thioester, amide, peptide and isopeptide bonds formed by the C-terminal Gly of ubiquitin (a 76-residue protein attached to proteins as an intracellular targeting signal).. Its function is as follows. May recognize and hydrolyze the peptide bond at the C-terminal Gly of ubiquitin. Involved in the processing of poly-ubiquitin precursors as well as that of ubiquitinated proteins. This is Ubiquitin carboxyl-terminal hydrolase 43 (Usp43) from Mus musculus (Mouse).